We begin with the raw amino-acid sequence, 235 residues long: Phosphoribosylaminoimidazole-succinocarboxamide synthase (235 aa).

The protein belongs to the SAICAR synthetase family.

The enzyme catalyses 5-amino-1-(5-phospho-D-ribosyl)imidazole-4-carboxylate + L-aspartate + ATP = (2S)-2-[5-amino-1-(5-phospho-beta-D-ribosyl)imidazole-4-carboxamido]succinate + ADP + phosphate + 2 H(+). The protein operates within purine metabolism; IMP biosynthesis via de novo pathway; 5-amino-1-(5-phospho-D-ribosyl)imidazole-4-carboxamide from 5-amino-1-(5-phospho-D-ribosyl)imidazole-4-carboxylate: step 1/2. The chain is Phosphoribosylaminoimidazole-succinocarboxamide synthase from Chlorobaculum parvum (strain DSM 263 / NCIMB 8327) (Chlorobium vibrioforme subsp. thiosulfatophilum).